Reading from the N-terminus, the 213-residue chain is Protein-L-isoaspartate O-methyltransferase (213 aa).

Ser60 is an active-site residue.

Belongs to the methyltransferase superfamily. L-isoaspartyl/D-aspartyl protein methyltransferase family.

The protein resides in the cytoplasm. The enzyme catalyses [protein]-L-isoaspartate + S-adenosyl-L-methionine = [protein]-L-isoaspartate alpha-methyl ester + S-adenosyl-L-homocysteine. Its function is as follows. Catalyzes the methyl esterification of L-isoaspartyl residues in peptides and proteins that result from spontaneous decomposition of normal L-aspartyl and L-asparaginyl residues. It plays a role in the repair and/or degradation of damaged proteins. The protein is Protein-L-isoaspartate O-methyltransferase of Roseobacter denitrificans (strain ATCC 33942 / OCh 114) (Erythrobacter sp. (strain OCh 114)).